The primary structure comprises 159 residues: SsrA-binding protein (159 aa).

Residues 137 to 147 are compositionally biased toward basic and acidic residues; it reads LAERQANRETE. The disordered stretch occupies residues 137 to 159; that stretch reads LAERQANRETEQAVGRRLKGMHD.

This sequence belongs to the SmpB family.

The protein localises to the cytoplasm. Required for rescue of stalled ribosomes mediated by trans-translation. Binds to transfer-messenger RNA (tmRNA), required for stable association of tmRNA with ribosomes. tmRNA and SmpB together mimic tRNA shape, replacing the anticodon stem-loop with SmpB. tmRNA is encoded by the ssrA gene; the 2 termini fold to resemble tRNA(Ala) and it encodes a 'tag peptide', a short internal open reading frame. During trans-translation Ala-aminoacylated tmRNA acts like a tRNA, entering the A-site of stalled ribosomes, displacing the stalled mRNA. The ribosome then switches to translate the ORF on the tmRNA; the nascent peptide is terminated with the 'tag peptide' encoded by the tmRNA and targeted for degradation. The ribosome is freed to recommence translation, which seems to be the essential function of trans-translation. The chain is SsrA-binding protein from Nocardioides sp. (strain ATCC BAA-499 / JS614).